Here is a 238-residue protein sequence, read N- to C-terminus: Orotidine 5'-phosphate decarboxylase (238 aa).

Substrate is bound by residues D10, K32, 59–68 (DLKLHDIPNT), T122, R184, Q193, G213, and R214. K61 functions as the Proton donor in the catalytic mechanism.

The protein belongs to the OMP decarboxylase family. Type 1 subfamily. In terms of assembly, homodimer.

It catalyses the reaction orotidine 5'-phosphate + H(+) = UMP + CO2. The protein operates within pyrimidine metabolism; UMP biosynthesis via de novo pathway; UMP from orotate: step 2/2. Functionally, catalyzes the decarboxylation of orotidine 5'-monophosphate (OMP) to uridine 5'-monophosphate (UMP). The protein is Orotidine 5'-phosphate decarboxylase of Bacillus cereus (strain Q1).